A 765-amino-acid polypeptide reads, in one-letter code: E3 ubiquitin-protein ligase SMURF2 (765 aa).

Positions 1–117 constitute a C2 domain; it reads MSNQGVRRNG…KDTGYQRLDL (117 aa). 3 consecutive WW domains span residues 157–190, 251–284, and 297–330; these read NDLP…RPTR, PDLP…DPRV, and GPLP…DPRL. A disordered region spans residues 341–375; the sequence is SPNGSRAAVEAQSSSRPGQLKEQAQSVVSPGNLPE. Polar residues predominate over residues 351–369; sequence AQSSSRPGQLKEQAQSVVS. In terms of domain architecture, HECT spans 431–765; it reads RPKDLWKRLM…IEETCGFAVE (335 aa). C733 functions as the Glycyl thioester intermediate in the catalytic mechanism.

It is found in the nucleus. The protein localises to the cytoplasm. Its subcellular location is the cell membrane. It localises to the membrane raft. It catalyses the reaction S-ubiquitinyl-[E2 ubiquitin-conjugating enzyme]-L-cysteine + [acceptor protein]-L-lysine = [E2 ubiquitin-conjugating enzyme]-L-cysteine + N(6)-ubiquitinyl-[acceptor protein]-L-lysine.. Its pathway is protein modification; protein ubiquitination. Functionally, E3 ubiquitin-protein ligase which accepts ubiquitin from an E2 ubiquitin-conjugating enzyme in the form of a thioester and then directly transfers the ubiquitin to targeted substrates. This Danio rerio (Zebrafish) protein is E3 ubiquitin-protein ligase SMURF2 (smurf2).